The primary structure comprises 279 residues: Probable ribosomal RNA small subunit methyltransferase A (279 aa).

The S-adenosyl-L-methionine site is built by asparagine 23, leucine 25, glycine 50, glutamate 71, aspartate 95, and asparagine 110.

The protein belongs to the class I-like SAM-binding methyltransferase superfamily. rRNA adenine N(6)-methyltransferase family. RsmA subfamily.

The protein resides in the cytoplasm. Its function is as follows. Specifically dimethylates two adjacent adenosines in the loop of a conserved hairpin near the 3'-end of 16S rRNA in the 30S particle. May play a critical role in biogenesis of 30S subunits. The polypeptide is Probable ribosomal RNA small subunit methyltransferase A (Thermococcus kodakarensis (strain ATCC BAA-918 / JCM 12380 / KOD1) (Pyrococcus kodakaraensis (strain KOD1))).